A 479-amino-acid polypeptide reads, in one-letter code: Replication factor C large subunit (479 aa).

43–50 (GPPGVGKT) provides a ligand contact to ATP. Positions 441–479 (EEKEESVEEVAEEKPEEEREEPRARKKAGKNLTLDSFFS) are disordered. Residues 452–463 (EEKPEEEREEPR) are compositionally biased toward basic and acidic residues.

It belongs to the activator 1 small subunits family. RfcL subfamily. In terms of assembly, heteropentamer composed of four small subunits (RfcS) and one large subunit (RfcL). Both subunits interact with PCNA.

Part of the RFC clamp loader complex which loads the PCNA sliding clamp onto DNA. The complex possesses DNA-dependent ATPase activity which is further stimulated by PCNA. The polypeptide is Replication factor C large subunit (rfcL) (Archaeoglobus fulgidus (strain ATCC 49558 / DSM 4304 / JCM 9628 / NBRC 100126 / VC-16)).